The sequence spans 503 residues: UDP-N-acetylglucosamine--peptide N-acetylglucosaminyltransferase GtfA subunit (503 aa).

The N-terminus R-fold-1 stretch occupies residues 1 to 78 (MTIYNINLGI…FTDIKIAPTS (78 aa)). 16–19 (GVEY) provides a ligand contact to UDP. Residues 79 to 195 (VTVDDVLAYF…VYHFKDKIFY (117 aa)) form an extended beta-sheet domain region. Residues 196-306 (GKQAFVRAFM…QPKIVTIPVG (111 aa)) are C-terminus R-fold-1. Residue His242 participates in N-acetyl-D-glucosamine binding. Positions 307-503 (SIDSLTDSSQ…KKTVEEVLHD (197 aa)) are R-fold-2. Arg328 contacts UDP. Residue Glu332 coordinates N-acetyl-D-glucosamine. Residues Lys333, Gly358, and 384-385 (HA) contribute to the UDP site. 404–407 (EGFG) contributes to the N-acetyl-D-glucosamine binding site. 408–412 (LTLME) is a UDP binding site.

Belongs to the glycosyltransferase group 1 family. Glycosyltransferase 4 subfamily. As to quaternary structure, monomer. Interacts with stabilizing protein GtfB, probably as a heterotetramer with 2 subunits each of GtfA and GtfB, part of the accessory SecA2/SecY2 protein translocation apparatus.

Its subcellular location is the cytoplasm. It localises to the cell membrane. It carries out the reaction L-seryl-[protein] + UDP-N-acetyl-alpha-D-glucosamine = 3-O-[N-acetyl-alpha-D-glucosaminyl]-L-seryl-[protein] + UDP + H(+). The protein operates within protein modification; protein glycosylation. Functionally, required for the polymorphic O-glycosylation of serine-rich repeat protein PsrP. Catalyzes the first step in glycosylation by transferring N-acetylglucosamine from UDP-GlcNAc to serine residues in PsrP. Part of the accessory SecA2/SecY2 system specifically required to export serine-rich repeat cell wall proteins encoded upstream in the same operon. The GtfA-GtfB complex adds GlcNAc from UDP-GlcNAc to PsrP (experimentally characterized with truncated PsrP-SSR1 constructs); this subunit alone has weak N-acetylglucosaminyl transferase activity that is 10-fold stimulated by GtfB. The complex requires at least a 25 residue-long peptide for activity; the in vitro assay has only been seen to glycosylate Ser residues. The alpha linkage was shown in L.reuteri. The protein is UDP-N-acetylglucosamine--peptide N-acetylglucosaminyltransferase GtfA subunit of Streptococcus pneumoniae serotype 4 (strain ATCC BAA-334 / TIGR4).